A 397-amino-acid polypeptide reads, in one-letter code: Pyridinium-3,5-bisthiocarboxylic acid mononucleotide nickel insertion protein (397 aa).

The protein belongs to the LarC family.

It carries out the reaction Ni(II)-pyridinium-3,5-bisthiocarboxylate mononucleotide = pyridinium-3,5-bisthiocarboxylate mononucleotide + Ni(2+). In terms of biological role, involved in the biosynthesis of a nickel-pincer cofactor ((SCS)Ni(II) pincer complex). Binds Ni(2+), and functions in nickel delivery to pyridinium-3,5-bisthiocarboxylic acid mononucleotide (P2TMN), to form the mature cofactor. Is thus probably required for the activation of nickel-pincer cofactor-dependent enzymes. This is Pyridinium-3,5-bisthiocarboxylic acid mononucleotide nickel insertion protein from Thermotoga petrophila (strain ATCC BAA-488 / DSM 13995 / JCM 10881 / RKU-1).